Here is a 574-residue protein sequence, read N- to C-terminus: ATP-dependent RNA helicase RhlB (574 aa).

The short motif at 9–37 is the Q motif element; that stretch reads VTFSSFDLHPALVAGLESAGFTRCTPIQA. Residues 40 to 220 form the Helicase ATP-binding domain; sequence LPVALPGGDV…YEHMNEPEKL (181 aa). Residue 53-60 participates in ATP binding; that stretch reads AQTGTGKT. Positions 166–169 match the DEAD box motif; it reads DEAD. In terms of domain architecture, Helicase C-terminal spans 231–393; that stretch reads RVRQRIYFPS…PVTSELLTPL (163 aa). Residues 423–432 are compositionally biased toward basic and acidic residues; it reads EQRAAEEQRR. The segment at 423-574 is disordered; sequence EQRAAEEQRR…RRLRSLVSGN (152 aa). Over residues 435–449 the composition is skewed to gly residues; it reads GRSGPGGGSRSGSGG. The span at 477 to 495 shows a compositional bias: low complexity; that stretch reads AAAAQTEKPVVAAAAAQAP. Residues 506-515 show a composition bias toward basic residues; that stretch reads PRKRRRRRNG. 2 stretches are compositionally biased toward low complexity: residues 523–535 and 553–562; these read PAVASTPIAAPAA and SSGSPSLLGR.

It belongs to the DEAD box helicase family. RhlB subfamily. In terms of assembly, component of the RNA degradosome, which is a multiprotein complex involved in RNA processing and mRNA degradation.

The protein resides in the cytoplasm. The enzyme catalyses ATP + H2O = ADP + phosphate + H(+). In terms of biological role, DEAD-box RNA helicase involved in RNA degradation. Has RNA-dependent ATPase activity and unwinds double-stranded RNA. This Xanthomonas oryzae pv. oryzae (strain KACC10331 / KXO85) protein is ATP-dependent RNA helicase RhlB.